Here is a 231-residue protein sequence, read N- to C-terminus: MAGKKVLLVYAHQEPKSFNGSMKQVAVEELSKQGCTVTVSDLYTMNFEPRATRNDVTGALSNPEVFKYGIEAYEAYKKKALTSDILEEQRKVQEADLVIFQFPLYWFSVPAILKGWMDRVLCQGFAFDVPGFYDSGFLKDKLALLSFTTGGTAEMYTKAGVNGDFRYFLWPLQHGTLHFCGFKVLAPQISFGPEVSSEEQRKVMLASWVQRLKSIWKEEPIHCTPSWYFQG.

FAD contacts are provided by residues H12, 18 to 21 (FNGS), and 104 to 107 (LYWF). 127–129 (FDV) lines the substrate pocket. FAD is bound by residues 148–151 (TTGG) and Y156. H174 and H178 together coordinate Zn(2+). E194 is an FAD binding site. Residue S197 is modified to Phosphoserine. R201 contributes to the FAD binding site. A Zn(2+)-binding site is contributed by C223.

Belongs to the NAD(P)H dehydrogenase (quinone) family. In terms of assembly, homodimer. The cofactor is Zn(2+). FAD is required as a cofactor.

Its subcellular location is the cytoplasm. It carries out the reaction 1-(beta-D-ribofuranosyl)-1,4-dihydronicotinamide + a quinone + H(+) = beta-nicotinamide D-riboside + a quinol. Functionally, the enzyme apparently serves as a quinone reductase in connection with conjugation reactions of hydroquinones involved in detoxification pathways as well as in biosynthetic processes such as the vitamin K-dependent gamma-carboxylation of glutamate residues in prothrombin synthesis. The polypeptide is Ribosyldihydronicotinamide dehydrogenase [quinone] (Nqo2) (Rattus norvegicus (Rat)).